Consider the following 117-residue polypeptide: uncharacterized protein (117 aa).

It to H.influenzae HI_1162 and to HI_0925.

This is an uncharacterized protein from Escherichia coli (strain K12).